The following is a 406-amino-acid chain: Imidazolonepropionase (406 aa).

Fe(3+) contacts are provided by histidine 72 and histidine 74. Positions 72 and 74 each coordinate Zn(2+). The 4-imidazolone-5-propanoate site is built by arginine 81, tyrosine 144, and histidine 177. N-formimidoyl-L-glutamate is bound at residue tyrosine 144. Histidine 242 serves as a coordination point for Fe(3+). Histidine 242 contributes to the Zn(2+) binding site. 4-imidazolone-5-propanoate is bound at residue glutamine 245. Aspartate 317 provides a ligand contact to Fe(3+). A Zn(2+)-binding site is contributed by aspartate 317. Asparagine 319 and glycine 321 together coordinate N-formimidoyl-L-glutamate. Threonine 322 provides a ligand contact to 4-imidazolone-5-propanoate.

The protein belongs to the metallo-dependent hydrolases superfamily. HutI family. The cofactor is Zn(2+). It depends on Fe(3+) as a cofactor.

The protein resides in the cytoplasm. It catalyses the reaction 4-imidazolone-5-propanoate + H2O = N-formimidoyl-L-glutamate. It participates in amino-acid degradation; L-histidine degradation into L-glutamate; N-formimidoyl-L-glutamate from L-histidine: step 3/3. Functionally, catalyzes the hydrolytic cleavage of the carbon-nitrogen bond in imidazolone-5-propanoate to yield N-formimidoyl-L-glutamate. It is the third step in the universal histidine degradation pathway. The sequence is that of Imidazolonepropionase from Yersinia pseudotuberculosis serotype O:3 (strain YPIII).